Consider the following 669-residue polypeptide: MGLLVLGTPLDWPESKKYCDYVRENGIMQFLHMYDTYISKKQDVLLWGDEIECIVVSMDDKSKKARVSLRQEDILNALGKYEETFRHVDFGPVYAALRNETCPKKIDAILSEVAKNPADYVERIGGNSNKDTIEITSSTKPHAQNAVPTFHPEYGRYMLESTPGAPYGSTLKDFTFVEYNMRLRRKIIENHLLPNELPLTITNFFRLGTPGFTDPEVEANGAISRSFFLPDDVINTHVRFPTLTANIRQRRGRKVAMNVPIFFDKNTIKPFHDPTVPWDRNLFPEDANARDGAALDNHIYMDSMGFGMGCCCLQITFQAKSCDEARLLYDQLTPITPLMLALSAGTPAFRGYLADQDCRWNVIAGAVDDRTEEEMKTVPKSRYDSVDLYISNDKRNLPEYNDVPVVINQDCYDKLIKDCIDERLAKHMAHIFSRDPLVIFSDSILQDNSVSNAHFENLNSTNWQSMRFKPPPPGSDIGWRVEFRSMEIQITDFENAAYSIFVVMLSRAILSFNLNLYMPISLVDENMKAAHARDAIHRKKFWFRCNPFPDASTDDESGQFRQLTIDELFNGEHRENGFPGLITIVRSYLYSCNPDAKTICLIERYIRLISQRANGQCLTAASWIRNFITTHPSYKQDSVVNDEINYDLIRRIAKIVDGDYDDTLLGKCS.

This sequence belongs to the glutamate--cysteine ligase type 3 family. In terms of assembly, heterodimer of a catalytic heavy chain and a regulatory light chain.

The enzyme catalyses L-cysteine + L-glutamate + ATP = gamma-L-glutamyl-L-cysteine + ADP + phosphate + H(+). Its pathway is sulfur metabolism; glutathione biosynthesis; glutathione from L-cysteine and L-glutamate: step 1/2. In terms of biological role, catalyzes the ATP-dependent ligation of L-glutamate and L-cysteine and participates in the first and rate-limiting step in glutathione biosynthesis. The protein is Glutamate--cysteine ligase (gcs1) of Schizosaccharomyces pombe (strain 972 / ATCC 24843) (Fission yeast).